Reading from the N-terminus, the 814-residue chain is Pre-rRNA-processing protein TSR1 homolog (814 aa).

Residues 1 to 67 (MADHAFHRPG…NQMNQLRKNK (67 aa)) form a disordered region. The segment covering 16–27 (NKAHKTGRHRSK) has biased composition (basic residues). Residues 84 to 249 (APFLVCLLPM…MRRIGGQKKR (166 aa)) form the Bms1-type G domain. Disordered regions lie at residues 316–357 (PYKL…DAEQ) and 392–448 (WIPD…EEFQ). Basic and acidic residues predominate over residues 317–340 (YKLDKSRDGENSEVRLLDRSDPSK). A compositionally biased stretch (acidic residues) spans 395 to 426 (DVEEVEDPDGKDDDDMSEDDDDDKEDDNEDFM). A compositionally biased stretch (basic and acidic residues) spans 431 to 442 (KSFEDEYEKRDS). At Thr-444 the chain carries Phosphothreonine.

The protein belongs to the TRAFAC class translation factor GTPase superfamily. Bms1-like GTPase family. TSR1 subfamily.

Its subcellular location is the nucleus. It localises to the nucleolus. Required during maturation of the 40S ribosomal subunit in the nucleolus. The protein is Pre-rRNA-processing protein TSR1 homolog of Drosophila melanogaster (Fruit fly).